The primary structure comprises 186 residues: Fanconi anemia core complex-associated protein 20 (186 aa).

2 disordered regions span residues 1–30 (MEEE…PWFL) and 50–90 (TADW…GSKT). Positions 7-16 (LRGRLSRRRP) are enriched in basic residues. S119 is modified (phosphoserine). The segment at 150–186 (LLSCPLCQKAFDPKLTQLDVDSHLAQCLAECTEDVVW) adopts a UBZ2-type zinc-finger fold. C153, C156, H172, and C176 together coordinate Zn(2+).

As to quaternary structure, component of the Fanconi anemia (FA) complex. Interacts with FANCA; interaction is direct. Interacts with REV1.

The protein resides in the nucleus. The protein localises to the chromosome. Functionally, component of the Fanconi anemia (FA) complex required to recruit the FA complex to DNA interstrand cross-links (ICLs) and promote ICLs repair. Following DNA damage recognizes and binds 'Lys-63'-linked ubiquitin generated by RNF8 at ICLs and recruits other components of the FA complex. Promotes translesion synthesis via interaction with REV1. In Mus musculus (Mouse), this protein is Fanconi anemia core complex-associated protein 20.